The sequence spans 184 residues: Endoribonuclease YbeY (184 aa).

H118, H122, and H128 together coordinate Zn(2+). The interval 156-184 (YHQDRQSQKDQRLLDKSRYFDELNHGDTP) is disordered. The segment covering 157–184 (HQDRQSQKDQRLLDKSRYFDELNHGDTP) has biased composition (basic and acidic residues).

It belongs to the endoribonuclease YbeY family. Zn(2+) is required as a cofactor.

It is found in the cytoplasm. Single strand-specific metallo-endoribonuclease involved in late-stage 70S ribosome quality control and in maturation of the 3' terminus of the 16S rRNA. The protein is Endoribonuclease YbeY of Mycolicibacterium vanbaalenii (strain DSM 7251 / JCM 13017 / BCRC 16820 / KCTC 9966 / NRRL B-24157 / PYR-1) (Mycobacterium vanbaalenii).